The primary structure comprises 117 residues: Ribonuclease P protein component (117 aa).

The protein belongs to the RnpA family. In terms of assembly, consists of a catalytic RNA component (M1 or rnpB) and a protein subunit.

It carries out the reaction Endonucleolytic cleavage of RNA, removing 5'-extranucleotides from tRNA precursor.. RNaseP catalyzes the removal of the 5'-leader sequence from pre-tRNA to produce the mature 5'-terminus. It can also cleave other RNA substrates such as 4.5S RNA. The protein component plays an auxiliary but essential role in vivo by binding to the 5'-leader sequence and broadening the substrate specificity of the ribozyme. This Lactococcus lactis subsp. lactis (strain IL1403) (Streptococcus lactis) protein is Ribonuclease P protein component.